A 467-amino-acid chain; its full sequence is Tripartite motif-containing protein 75 (467 aa).

The RING-type zinc-finger motif lies at 16–57 (CPICLDDLTDPVTVECGHNFCRSCIKDFWAGQQATSSCPVCR). A B box-type zinc finger spans residues 90 to 131 (ESSTSCERHNQALTLFCEDDLQLLCDQCVEPESHGRHQVLSI). The Zn(2+) site is built by cysteine 95, histidine 98, cysteine 117, and histidine 123. Residues 168-222 (VTLREQAEAQRSQLTSECEKLMRFLDQEERAAFSRLEDEEMRLEKRLLDNIAALE) adopt a coiled-coil conformation. The 191-residue stretch at 276-466 (YSFPLQYSAL…LRLCSATDSE (191 aa)) folds into the B30.2/SPRY domain.

Belongs to the TRIM/RBCC family.

Its subcellular location is the cytoplasm. The protein resides in the cytoskeleton. The protein localises to the spindle. Its function is as follows. May play a role in female meiosis. The sequence is that of Tripartite motif-containing protein 75 from Mus musculus (Mouse).